The chain runs to 177 residues: Thymidine kinase (177 aa).

Residue 11-18 (GPMFSGKS) participates in ATP binding. The active-site Proton acceptor is the E83. F113 contributes to the substrate binding site. Zn(2+) is bound by residues C138 and C141. 157–161 (IEIIG) contributes to the substrate binding site. Zn(2+) is bound by residues C170 and C173.

This sequence belongs to the thymidine kinase family. Homotetramer. Two molecules of substrate bind to each enzyme tetramer.

The enzyme catalyses thymidine + ATP = dTMP + ADP + H(+). Its function is as follows. Phosphorylates thymidine and thymidine analogs, such as azidothymidine (AZT). Part of the salvage pathway for pyrimidine deoxyribonucleotide synthesis. In Procyon lotor (Raccoon), this protein is Thymidine kinase (OPG101).